The primary structure comprises 1000 residues: ATP-dependent DNA/RNA helicase DHX36 (1000 aa).

The interval 1-43 (MSYDYHQSWSRDGGPRGSGQGSGGGGGGSRGSGGGGGGRGGRG) is required for recruitment to cytoplasmic stress granules. A disordered region spans residues 1 to 53 (MSYDYHQSWSRDGGPRGSGQGSGGGGGGSRGSGGGGGGRGGRGRHPAHLKGRE). The segment at 1-96 (MSYDYHQSWS…IVQLLNSVQA (96 aa)) is required for the pre-miR-134 transport. The segment at 1–192 (MSYDYHQSWS…KKTDPRYIEM (192 aa)) is necessary for nuclear and nucleolar caps localizations. A compositionally biased stretch (gly residues) spans 15–40 (PRGSGQGSGGGGGGSRGSGGGGGGRG). The tract at residues 45–67 (HPAHLKGREIGLWYAKKQTQKNK) is DSM (DHX36-specific motif). A required for G4-DNA- and G4-RNA-binding region spans residues 45–97 (HPAHLKGREIGLWYAKKQTQKNKEAERQERAVVHMDERREEQIVQLLNSVQAK). RecA-like domain regions lie at residues 98 to 378 (NDKD…MIHI) and 379 to 620 (PGFT…DYQL). The residue at position 153 (serine 153) is a Phosphoserine. Residues 209–379 (VNLINNHQVT…FGNCPMIHIP (171 aa)) enclose the Helicase ATP-binding domain. 225-230 (GCGKTT) lines the ATP pocket. The interval 257–309 (RRISAISVAERVAAERAESCGNGNSTGYQIRLQSRLPRKQGSILYCTTGIILQ) is necessary for interaction with single-stranded DNA at the 3'-end of the G4-DNA structure. The DEAH box motif lies at 326–329 (DEIH). Glutamate 327 and histidine 329 together coordinate Mg(2+). In terms of domain architecture, Helicase C-terminal spans 469–639 (ALIRYIVLEE…ELCLQIKILR (171 aa)). The segment at 490–549 (WDNISTLHDLLMSQVMFKSDRFLIIPLHSLMPTVNQTQVFKKTPPGVRKIVIATNIAETS) is necessary for interaction with single-stranded DNA at the 3'-end of the G4-DNA structure. The Nuclear localization signal signature appears at 509–520 (DRFLIIPLHSLM). ATP contacts are provided by residues serine 549 and 594-597 (RAGR). The WH domain stretch occupies residues 621–690 (PEILRTPLEE…LGVHLARLPV (70 aa)). Necessary for interaction with single-stranded DNA at the 3'-end of the G4-DNA structure stretches follow at residues 630 to 689 (ELCL…ARLP), 841 to 852 (NLGKKRKMVKVH), and 862 to 892 (HPKSVNVEQTDFHYNWLIYHLKMRTSSIYLY). An OB-fold-like subdomains region spans residues 833-897 (PKVAKIRLNL…SIYLYDCTEV (65 aa)). Lysine 939 is modified (N6-acetyllysine).

As to quaternary structure, found in a multi-helicase-TICAM1 complex at least composed of DHX36, DDX1, DDX21 and TICAM1; this complex exists in resting cells with or without dsRNA poly(I:C) ligand stimulation. Interacts (via C-terminus) with TICAM1 (via TIR domain). Interacts (via C-terminus) with DDX21; this interaction serves as bridges to TICAM1. Interacts with TERT; this interaction is dependent on the ability of DHX36 to bind to the G-quadruplex RNA (G4-RNA) structure present in the telomerase RNA template component (TERC). Interacts with DKC1; this interaction is dependent on the ability of DHX36 to bind to the G4-RNA structure present in TERC. Interacts with PARN; this interaction stimulates PARN to enhance uPA mRNA decay. Interacts with EXOSC3; this interaction occurs in a RNase-insensitive manner. Interacts with EXOSC10; this interaction occurs in a RNase-insensitive manner. Interacts with ILF3; this interaction occurs in a RNA-dependent manner. Interacts with ELAVL1; this interaction occurs in an RNA-dependent manner. Interacts with DDX5; this interaction occurs in a RNA-dependent manner. Interacts with DDX17; this interaction occurs in a RNA-dependent manner. Interacts with HDAC1; this interaction occurs in a RNA-dependent manner. Interacts with HDAC3; this interaction occurs in a RNA-dependent manner. Interacts with HDAC4. Interacts with AGO1. Interacts with AGO2. Interacts with ERCC6. Mg(2+) serves as cofactor.

It is found in the nucleus. The protein resides in the cytoplasm. It localises to the cytosol. The protein localises to the stress granule. Its subcellular location is the nucleus speckle. It is found in the chromosome. The protein resides in the telomere. It localises to the mitochondrion. The protein localises to the perikaryon. Its subcellular location is the cell projection. It is found in the dendrite. The protein resides in the axon. The catalysed reaction is ATP + H2O = ADP + phosphate + H(+). ATPase activity is enhanced in the presence of homomeric poly(U) RNAs, but not by double-stranded DNA (dsDNA), double-stranded RNA (dsRNA) and tRNA. Its function is as follows. Multifunctional ATP-dependent helicase that unwinds G-quadruplex (G4) structures. Plays a role in many biological processes such as genomic integrity, gene expression regulations and as a sensor to initiate antiviral responses. G4 structures correspond to helical structures containing guanine tetrads. Binds with high affinity to and unwinds G4 structures that are formed in nucleic acids (G4-DNA and G4-RNA). Plays a role in genomic integrity. Converts the G4-RNA structure present in telomerase RNA template component (TREC) into a double-stranded RNA to promote P1 helix formation that acts as a template boundary ensuring accurate reverse transcription. Plays a role in transcriptional regulation. Resolves G4-DNA structures in promoters of genes, such as YY1, KIT/c-kit and ALPL and positively regulates their expression. Plays a role in post-transcriptional regulation. Unwinds a G4-RNA structure located in the 3'-UTR polyadenylation site of the pre-mRNA TP53 and stimulates TP53 pre-mRNA 3'-end processing in response to ultraviolet (UV)-induced DNA damage. Binds to the precursor-microRNA-134 (pre-miR-134) terminal loop and regulates its transport into the synapto-dendritic compartment. Involved in the pre-miR-134-dependent inhibition of target gene expression and the control of dendritic spine size. Plays a role in the regulation of cytoplasmic mRNA translation and mRNA stability. Binds to both G4-RNA structures and alternative non-quadruplex-forming sequence within the 3'-UTR of the PITX1 mRNA regulating negatively PITX1 protein expression. Binds to both G4-RNA structure in the 5'-UTR and AU-rich elements (AREs) localized in the 3'-UTR of NKX2-5 mRNA to either stimulate protein translation or induce mRNA decay in an ELAVL1-dependent manner, respectively. Also binds to ARE sequences present in several mRNAs mediating exosome-mediated 3'-5' mRNA degradation. Involved in cytoplasmic urokinase-type plasminogen activator (uPA) mRNA decay. Component of a multi-helicase-TICAM1 complex that acts as a cytoplasmic sensor of viral double-stranded RNA (dsRNA) and plays a role in the activation of a cascade of antiviral responses including the induction of pro-inflammatory cytokines via the adapter molecule TICAM1. Required for the early embryonic development and hematopoiesis. Involved in the regulation of cardioblast differentiation and proliferation during heart development. Involved in spermatogonia differentiation. May play a role in ossification. The chain is ATP-dependent DNA/RNA helicase DHX36 from Rattus norvegicus (Rat).